We begin with the raw amino-acid sequence, 311 residues long: MNNPLYQKNIISISDLSRAELELILTTAQSLKHNPQPELLKNKVIASCFFEASTRTRLSFATAVQRLGGTVIGFDNAGNTSLAQKGETLADSVKIIASYADAFFIRHPQEGAARLAAEFTNIPVINGGDGSNQHPTQTLLDLFTIYETQNRLDNLNIAFVGDLKYGRTVHSLAQALSLFNCNFYFIAPEALAMPDYILEELNEKGINYSVHSSIEEVVDSLDVLYMTRVQKERFDETEYQHIKSAFLLNADMLENVRENLKVLHPLPRVDEININVDKTPYAYYFQQAQNGIYARQALLALLLTNHFQDQA.

Carbamoyl phosphate is bound by residues Arg55 and Thr56. Lys85 is an L-aspartate binding site. Arg106, His134, and Gln137 together coordinate carbamoyl phosphate. The L-aspartate site is built by Arg167 and Arg228. Leu266 and Pro267 together coordinate carbamoyl phosphate.

The protein belongs to the aspartate/ornithine carbamoyltransferase superfamily. ATCase family. Heterododecamer (2C3:3R2) of six catalytic PyrB chains organized as two trimers (C3), and six regulatory PyrI chains organized as three dimers (R2).

The catalysed reaction is carbamoyl phosphate + L-aspartate = N-carbamoyl-L-aspartate + phosphate + H(+). Its pathway is pyrimidine metabolism; UMP biosynthesis via de novo pathway; (S)-dihydroorotate from bicarbonate: step 2/3. Catalyzes the condensation of carbamoyl phosphate and aspartate to form carbamoyl aspartate and inorganic phosphate, the committed step in the de novo pyrimidine nucleotide biosynthesis pathway. The protein is Aspartate carbamoyltransferase catalytic subunit of Psychromonas ingrahamii (strain DSM 17664 / CCUG 51855 / 37).